Consider the following 181-residue polypeptide: Cytidylate kinase (181 aa).

Position 12–20 (12–20 (GLAGSGTTT)) interacts with ATP.

This sequence belongs to the cytidylate kinase family. Type 2 subfamily.

Its subcellular location is the cytoplasm. It catalyses the reaction CMP + ATP = CDP + ADP. It carries out the reaction dCMP + ATP = dCDP + ADP. This is Cytidylate kinase (cmk) from Pyrococcus abyssi (strain GE5 / Orsay).